The primary structure comprises 115 residues: Large ribosomal subunit protein bL19 (115 aa).

Belongs to the bacterial ribosomal protein bL19 family.

In terms of biological role, this protein is located at the 30S-50S ribosomal subunit interface and may play a role in the structure and function of the aminoacyl-tRNA binding site. The polypeptide is Large ribosomal subunit protein bL19 (Coxiella burnetii (strain CbuK_Q154) (Coxiella burnetii (strain Q154))).